A 265-amino-acid chain; its full sequence is Interleukin-2 receptor subunit alpha (265 aa).

An N-terminal signal peptide occupies residues 1–21 (MDSYLLMWGLLTLIMVPGCFA). In terms of domain architecture, Sushi 1 spans 22–84 (ELCDDDPPEI…SWDNQCQCTS (63 aa)). At 22 to 240 (ELCDDDPPEI…ETFIFTTEYQ (219 aa)) the chain is on the extracellular side. 3 disulfide bridges follow: C24–C67, C49–C80, and C51–C82. N70 and N89 each carry an N-linked (GlcNAc...) asparagine glycan. The span at 87-98 (TRNTTKQVTPQP) shows a compositional bias: polar residues. The segment at 87–123 (TRNTTKQVTPQPEEQKERKTTEMQSPMQPVDQASLPG) is disordered. The region spanning 123 to 186 (GHCREPPPWE…WTQPQLICTG (64 aa)) is the Sushi 2 domain. Intrachain disulfides connect C125–C168 and C152–C184. The segment at 190–210 (TSQFPGEEKPQASPEGRPESE) is disordered. The segment covering 195-209 (GEEKPQASPEGRPES) has biased composition (basic and acidic residues). The chain crosses the membrane as a helical span at residues 241-259 (VAVAGCVFLLISVLLLSGL). Residues 260 to 265 (TWQRRQ) lie on the Cytoplasmic side of the membrane.

Non-covalent dimer of an alpha and a beta subunit. IL2R exists in 3 different forms: a high affinity dimer, an intermediate affinity monomer (beta subunit), and a low affinity monomer (alpha subunit). The high and intermediate affinity forms also associate with a gamma subunit.

Its subcellular location is the membrane. Its function is as follows. Receptor for interleukin-2. The receptor is involved in the regulation of immune tolerance by controlling regulatory T cells (TREGs) activity. TREGs suppress the activation and expansion of autoreactive T-cells. The polypeptide is Interleukin-2 receptor subunit alpha (IL2RA) (Pan troglodytes (Chimpanzee)).